The following is a 435-amino-acid chain: Proline and serine-rich protein 2 (435 aa).

Residues 1–10 (MPVTHRKSDA) are compositionally biased toward basic and acidic residues. The segment at 1 to 22 (MPVTHRKSDASDMNSDTSPSCR) is disordered. Serine 8 carries the post-translational modification Phosphoserine. Polar residues predominate over residues 11-20 (SDMNSDTSPS). Phosphoserine is present on serine 43. Position 45 is a phosphothreonine (threonine 45). Composition is skewed to low complexity over residues 92–102 (PSLEESTSSPS) and 113–126 (PAPG…LPEG). 2 disordered regions span residues 92–276 (PSLE…RAAV) and 295–420 (AFPA…SEEA). The residue at position 146 (threonine 146) is a Phosphothreonine. Residues 146–169 (TPPPPDPPAPETLLAPPPLPSTPD) show a composition bias toward pro residues. Serine 166 is subject to Phosphoserine. A Phosphothreonine modification is found at threonine 167. Phosphoserine is present on residues serine 179, serine 212, and serine 215. Residues 228-237 (PAARGPRSGD) are compositionally biased toward low complexity. Position 252 is an asymmetric dimethylarginine; alternate (arginine 252). Omega-N-methylarginine; alternate is present on arginine 252. Over residues 302–311 (AGEGAPGGGS) the composition is skewed to gly residues. Serine 312 carries the post-translational modification Phosphoserine. Residue arginine 320 is modified to Omega-N-methylarginine; alternate. At arginine 320 the chain carries Dimethylated arginine; alternate. Arginine 378 is subject to Omega-N-methylarginine. Residue serine 400 is modified to Phosphoserine. Arginine 414 carries the omega-N-methylarginine modification.

This Homo sapiens (Human) protein is Proline and serine-rich protein 2 (PROSER2).